The primary structure comprises 76 residues: Conotoxin Bu28 (76 aa).

A signal peptide spans 1–24 (MTSVQSATCCCLLWLVLCVQLVTP). Positions 25–39 (DSPATAQLSRHLTAR) are excised as a propeptide. 2 cysteine pairs are disulfide-bonded: Cys-50–Cys-63 and Cys-54–Cys-65. Arg-69 carries the arginine amide modification. The propeptide occupies 71 to 76 (VVSSSI).

Belongs to the conotoxin J superfamily. As to expression, expressed by the venom duct.

The protein localises to the secreted. Functionally, highly inhibits both nicotinic acetylcholine receptors (neuronal (alpha-3/beta-4) and muscular (alpha-1/beta-1/epsilon/delta) subtypes) and the voltage-gated potassium channel Kv1.6/KCNA6 subtype. The polypeptide is Conotoxin Bu28 (Conus bullatus (Bubble cone)).